Here is a 95-residue protein sequence, read N- to C-terminus: Large ribosomal subunit protein uL23 (95 aa).

The protein belongs to the universal ribosomal protein uL23 family. As to quaternary structure, part of the 50S ribosomal subunit. Contacts protein L29, and trigger factor when it is bound to the ribosome.

In terms of biological role, one of the early assembly proteins it binds 23S rRNA. One of the proteins that surrounds the polypeptide exit tunnel on the outside of the ribosome. Forms the main docking site for trigger factor binding to the ribosome. The sequence is that of Large ribosomal subunit protein uL23 from Desulfatibacillum aliphaticivorans.